We begin with the raw amino-acid sequence, 1270 residues long: DNA-directed RNA polymerase subunit beta (1270 aa).

It belongs to the RNA polymerase beta chain family. As to quaternary structure, the RNAP catalytic core consists of 2 alpha, 1 beta, 1 beta' and 1 omega subunit. When a sigma factor is associated with the core the holoenzyme is formed, which can initiate transcription.

The enzyme catalyses RNA(n) + a ribonucleoside 5'-triphosphate = RNA(n+1) + diphosphate. In terms of biological role, DNA-dependent RNA polymerase catalyzes the transcription of DNA into RNA using the four ribonucleoside triphosphates as substrates. The polypeptide is DNA-directed RNA polymerase subunit beta (Flavobacterium johnsoniae (strain ATCC 17061 / DSM 2064 / JCM 8514 / BCRC 14874 / CCUG 350202 / NBRC 14942 / NCIMB 11054 / UW101) (Cytophaga johnsonae)).